Consider the following 162-residue polypeptide: Small ribosomal subunit protein uS7m (162 aa).

This sequence belongs to the universal ribosomal protein uS7 family. Part of the small ribosomal subunit.

The protein resides in the mitochondrion. One of the primary rRNA binding proteins, it binds directly to 16S-like rRNA where it nucleates assembly of the head domain of the small subunit. The sequence is that of Small ribosomal subunit protein uS7m (mrps7) from Dictyostelium discoideum (Social amoeba).